The sequence spans 1068 residues: Leucine zipper protein 1 (1068 aa).

A2 carries the post-translational modification N-acetylalanine. Positions 11 to 354 (ASNRHLRFKL…KLQVRKQKEL (344 aa)) form a coiled coil. Disordered stretches follow at residues 251 to 292 (LSSK…VKDL), 375 to 402 (TKLKGHGSEASVSKHTSRELSPQHKRER), and 432 to 558 (AAKA…QAVE). Positions 254 to 292 (KESKRKGSLDYLKQVENETRDKSENEKNRNQEDNKVKDL) are enriched in basic and acidic residues. Phosphoserine is present on residues S256, S261, S395, S513, S571, S575, S612, and S660. Positions 510–519 (RTFSDSTHVS) are enriched in polar residues. Positions 677 to 700 (TTITPEPEPKPQPNSREKVKSRGG) are disordered. Residue T680 is modified to Phosphothreonine. S691 and S746 each carry phosphoserine. Residues 782 to 829 (QKSTSKSVTSKVTSSITIYPSDSSGPRAVPSEAPRERHTSTSNIQVGP) are disordered. The segment covering 785–796 (TSKSVTSKVTSS) has biased composition (low complexity). The segment at 834-884 (AISNHVSSPLELSIHKHDITLQLTEAERVGDGSPKNRAEMVVSRSSILIKP) is required for interaction with FLNA. S906 bears the Phosphoserine mark. A disordered region spans residues 924–945 (RDLKCSEDPPTGIGRNMEATNA). T952 carries the phosphothreonine modification. 2 disordered regions span residues 959–995 (QPRSQPSEQGARRVGNSGDAPELSPRRTQSSLTASEV) and 1033–1068 (NPLEHSELPGKQGLPEPEPVWTEERLHPAKPYAEED). A compositionally biased stretch (polar residues) spans 984–994 (RRTQSSLTASE). Residue S988 is modified to Phosphoserine.

In terms of assembly, component of the CERF-1 ISWI chromatin remodeling complex (also called the CECR2-containing remodeling factor (CERF) complex) at least composed of CECR2 and SMARCA1. Component of the CERF-5 ISWI chromatin remodeling complex at least composed of CECR2 and SMARCA5/SNF2H. LUZP1 is detected as part of the CERF-1 and CERF-5 complexes in embryonic stem (ES) cells where it is involved in complex stabilization but is not detected in the complexes in the testis. Interacts (via C-terminus) with LIMA1/EPLIN; both proteins restrict ciliation and may work together to regulate this process. Interacts with myosin light chain MYL9; the interaction results in inhibition of phosphorylation of MYL9 by DAPK3. Interacts with DAPK3; the interaction is likely to occur throughout the cell cycle and reduces the LUZP1-mediated suppression of MYL9 phosphorylation. Interacts with the chromosomal passenger complex (CPC); CPC kinase activity is required for localization of LUZP1 to the centromere. In terms of tissue distribution, predominantly expressed in the brain (at protein level).

The protein resides in the cytoplasm. The protein localises to the cytoskeleton. It localises to the microtubule organizing center. It is found in the centrosome. Its subcellular location is the cilium basal body. The protein resides in the midbody. The protein localises to the chromosome. It localises to the centromere. It is found in the spindle. Its subcellular location is the stress fiber. The protein resides in the nucleus. The protein localises to the cell projection. It localises to the dendrite. It is found in the perikaryon. Its subcellular location is the cell junction. The protein resides in the tight junction. In terms of biological role, F-actin cross-linking protein. Stabilizes actin and acts as a negative regulator of primary cilium formation. Positively regulates the phosphorylation of both myosin II and protein phosphatase 1 regulatory subunit PPP1R12A/MYPT1 and promotes the assembly of myosin II stacks within actin stress fibers. Inhibits the phosphorylation of myosin light chain MYL9 by DAPK3 and suppresses the constriction velocity of the contractile ring during cytokinesis. Binds to microtubules and promotes epithelial cell apical constriction by up-regulating levels of diphosphorylated myosin light chain (MLC) through microtubule-dependent inhibition of MLC dephosphorylation by myosin phosphatase. Involved in regulation of cell migration, nuclear size and centriole number, probably through regulation of the actin cytoskeleton. Component of the CERF-1 and CERF-5 chromatin remodeling complexes in embryonic stem cells where it acts to stabilize the complexes. Plays a role in embryonic brain and cardiovascular development. The polypeptide is Leucine zipper protein 1 (Luzp1) (Mus musculus (Mouse)).